Reading from the N-terminus, the 60-residue chain is Large ribosomal subunit protein bL32 (60 aa).

The disordered stretch occupies residues 1-46 (MAVQQNKKSPSKRGMHRSHNALNTPGTAIEPTTGEVHLRHHISPTG). Positions 9-19 (SPSKRGMHRSH) are enriched in basic residues.

Belongs to the bacterial ribosomal protein bL32 family.

In Leptothrix cholodnii (strain ATCC 51168 / LMG 8142 / SP-6) (Leptothrix discophora (strain SP-6)), this protein is Large ribosomal subunit protein bL32.